Here is a 466-residue protein sequence, read N- to C-terminus: Argininosuccinate lyase (466 aa).

The protein belongs to the lyase 1 family. Argininosuccinate lyase subfamily.

The protein localises to the cytoplasm. The catalysed reaction is 2-(N(omega)-L-arginino)succinate = fumarate + L-arginine. The protein operates within amino-acid biosynthesis; L-arginine biosynthesis; L-arginine from L-ornithine and carbamoyl phosphate: step 3/3. The sequence is that of Argininosuccinate lyase from Campylobacter concisus (strain 13826).